A 381-amino-acid chain; its full sequence is Neuropeptide Y receptor type 2 (381 aa).

The segment at Met-1–Glu-37 is disordered. At Met-1–Val-51 the chain is on the extracellular side. Residue Asn-11 is glycosylated (N-linked (GlcNAc...) asparagine). The helical transmembrane segment at Ile-52 to Ile-72 threads the bilayer. The Cytoplasmic portion of the chain corresponds to His-73 to Asn-86. The chain crosses the membrane as a helical span at residues Phe-87–Thr-107. Residues Leu-108–His-124 lie on the Extracellular side of the membrane. Cys-123 and Cys-203 are oxidised to a cystine. Residues Leu-125–Ala-145 form a helical membrane-spanning segment. Residues Leu-146 to Ser-165 are Cytoplasmic-facing. The helical transmembrane segment at Phe-166–Phe-186 threads the bilayer. Over Arg-187–Gly-216 the chain is Extracellular. A helical transmembrane segment spans residues Thr-217–Phe-237. At Ser-238–Lys-268 the chain is on the cytoplasmic side. A helical membrane pass occupies residues Met-269–Leu-289. The Extracellular segment spans residues Ala-290–Lys-304. A helical membrane pass occupies residues Leu-305 to Tyr-325. The Cytoplasmic portion of the chain corresponds to Gly-326–Val-381. Cys-342 carries S-palmitoyl cysteine lipidation.

Belongs to the G-protein coupled receptor 1 family.

It is found in the cell membrane. Its function is as follows. Receptor for neuropeptide Y and peptide YY. This is Neuropeptide Y receptor type 2 (Npy2r) from Mus musculus (Mouse).